The chain runs to 147 residues: Hemoglobin subunit rho (147 aa).

The region spanning 3–147 (HWSAEEKQLI…VAHALAYKYH (145 aa)) is the Globin domain. Positions 64 and 93 each coordinate heme b.

The protein belongs to the globin family.

In terms of biological role, the rho chain is the major early embryonic beta-type hemoglobin chain. This Gallus gallus (Chicken) protein is Hemoglobin subunit rho.